The chain runs to 338 residues: 1-aminocyclopropane-1-carboxylate deaminase (338 aa).

The residue at position 51 (Lys-51) is an N6-(pyridoxal phosphate)lysine. Ser-78 (nucleophile) is an active-site residue.

The protein belongs to the ACC deaminase/D-cysteine desulfhydrase family. It depends on pyridoxal 5'-phosphate as a cofactor.

It carries out the reaction 1-aminocyclopropane-1-carboxylate + H2O = 2-oxobutanoate + NH4(+). In terms of biological role, catalyzes a cyclopropane ring-opening reaction, the irreversible conversion of 1-aminocyclopropane-1-carboxylate (ACC) to ammonia and alpha-ketobutyrate. Allows growth on ACC as a nitrogen source. This Enterobacter cloacae protein is 1-aminocyclopropane-1-carboxylate deaminase.